We begin with the raw amino-acid sequence, 565 residues long: Glucose-6-phosphate isomerase (565 aa).

The Proton donor role is filled by glutamate 373. Residues histidine 404 and lysine 530 contribute to the active site.

It belongs to the GPI family.

The protein localises to the cytoplasm. It carries out the reaction alpha-D-glucose 6-phosphate = beta-D-fructose 6-phosphate. The protein operates within carbohydrate biosynthesis; gluconeogenesis. Its pathway is carbohydrate degradation; glycolysis; D-glyceraldehyde 3-phosphate and glycerone phosphate from D-glucose: step 2/4. Its function is as follows. Catalyzes the reversible isomerization of glucose-6-phosphate to fructose-6-phosphate. This Corynebacterium jeikeium (strain K411) protein is Glucose-6-phosphate isomerase.